We begin with the raw amino-acid sequence, 468 residues long: ATP synthase subunit beta (468 aa).

Gly155 to Thr162 contributes to the ATP binding site.

It belongs to the ATPase alpha/beta chains family. F-type ATPases have 2 components, CF(1) - the catalytic core - and CF(0) - the membrane proton channel. CF(1) has five subunits: alpha(3), beta(3), gamma(1), delta(1), epsilon(1). CF(0) has three main subunits: a(1), b(2) and c(9-12). The alpha and beta chains form an alternating ring which encloses part of the gamma chain. CF(1) is attached to CF(0) by a central stalk formed by the gamma and epsilon chains, while a peripheral stalk is formed by the delta and b chains.

The protein resides in the cell membrane. The enzyme catalyses ATP + H2O + 4 H(+)(in) = ADP + phosphate + 5 H(+)(out). Produces ATP from ADP in the presence of a proton gradient across the membrane. The catalytic sites are hosted primarily by the beta subunits. This is ATP synthase subunit beta from Streptococcus pyogenes serotype M5 (strain Manfredo).